We begin with the raw amino-acid sequence, 368 residues long: Phenylalanine--tRNA ligase alpha subunit (368 aa).

A Mg(2+)-binding site is contributed by glutamate 268.

This sequence belongs to the class-II aminoacyl-tRNA synthetase family. Phe-tRNA synthetase alpha subunit type 1 subfamily. In terms of assembly, tetramer of two alpha and two beta subunits. Mg(2+) serves as cofactor.

The protein localises to the cytoplasm. The enzyme catalyses tRNA(Phe) + L-phenylalanine + ATP = L-phenylalanyl-tRNA(Phe) + AMP + diphosphate + H(+). The polypeptide is Phenylalanine--tRNA ligase alpha subunit (Nitrobacter hamburgensis (strain DSM 10229 / NCIMB 13809 / X14)).